The chain runs to 418 residues: Serine protease inhibitor A3N (418 aa).

Residues 1–29 (MTRLVTLELLMAGIGSALLCFPDCILGED) form the signal peptide. S93 carries the phosphoserine modification. N-linked (GlcNAc...) asparagine glycosylation is found at N104, N258, and N269. Residues 367–394 (GTEAAAATGVKFVPMSAKLDPLIIAFDR) are RCL.

It belongs to the serpin family. Post-translationally, N-glycosylated. Liver.

Its subcellular location is the secreted. This is Serine protease inhibitor A3N (Serpina3n) from Rattus norvegicus (Rat).